Reading from the N-terminus, the 136-residue chain is Large ribosomal subunit protein uL16 (136 aa).

It belongs to the universal ribosomal protein uL16 family. In terms of assembly, part of the 50S ribosomal subunit.

Functionally, binds 23S rRNA and is also seen to make contacts with the A and possibly P site tRNAs. The sequence is that of Large ribosomal subunit protein uL16 from Mannheimia succiniciproducens (strain KCTC 0769BP / MBEL55E).